The following is a 354-amino-acid chain: MNEAIIQLDHIDITFRQKKRVIEAVKDVTVHINQGDIYGIVGYSGAGKSTLVRVINLLQAPTNGKITVDGDVTFDQGKIQLSANALRQKRRDTGMIFQHFNLMAQKTAKENVAFALRHSSLSKTEKEHKVIELLELVGLSERADNYPAQLSGGQKQRVAIARALANDPKILISDEATSALDPKTTKQILALLQELNRKLGLTIVMITHEMQIVKDICNRVAVMQNGVLIEEGSVLDIFSNPKEALTQKFITTATGIDEALEKINQQDIVKHLPANALLAQLKYAGTSTDEPLLNSIYRQFEVTANILYGNIEILDHIPVGDMIVVLEGQAENILAAEKALHEAGVDVSILKRGA.

An ABC transporter domain is found at 8 to 250 (LDHIDITFRQ…PKEALTQKFI (243 aa)). An ATP-binding site is contributed by 42-49 (GYSGAGKS).

It belongs to the ABC transporter superfamily. Methionine importer (TC 3.A.1.24) family. The complex is composed of two ATP-binding proteins (MetN), two transmembrane proteins (MetI) and a solute-binding protein (MetQ).

It is found in the cell membrane. The catalysed reaction is L-methionine(out) + ATP + H2O = L-methionine(in) + ADP + phosphate + H(+). The enzyme catalyses D-methionine(out) + ATP + H2O = D-methionine(in) + ADP + phosphate + H(+). Its function is as follows. Part of the ABC transporter complex MetNIQ involved in methionine import. Responsible for energy coupling to the transport system. This chain is Methionine import ATP-binding protein MetN, found in Streptococcus pyogenes serotype M18 (strain MGAS8232).